The sequence spans 114 residues: Large ribosomal subunit protein uL22c (114 aa).

It belongs to the universal ribosomal protein uL22 family. As to quaternary structure, part of the 50S ribosomal subunit.

It is found in the plastid. The protein resides in the cyanelle. In terms of biological role, this protein binds specifically to 23S rRNA. Functionally, the globular domain of the protein is located near the polypeptide exit tunnel on the outside of the subunit, while an extended beta-hairpin is found that lines the wall of the exit tunnel in the center of the 70S ribosome. In Cyanophora paradoxa, this protein is Large ribosomal subunit protein uL22c (rpl22).